A 239-amino-acid chain; its full sequence is Ribosomal RNA small subunit methyltransferase G (239 aa).

Residues Gly-77, Phe-82, 128–129, and Arg-146 contribute to the S-adenosyl-L-methionine site; that span reads AE. The tract at residues 217 to 239 is disordered; sequence RRQTSKKYPRKPGTPNKSPLVES.

It belongs to the methyltransferase superfamily. RNA methyltransferase RsmG family.

It localises to the cytoplasm. In terms of biological role, specifically methylates the N7 position of guanine in position 535 of 16S rRNA. This Staphylococcus epidermidis (strain ATCC 12228 / FDA PCI 1200) protein is Ribosomal RNA small subunit methyltransferase G.